A 678-amino-acid polypeptide reads, in one-letter code: Protein CASP (678 aa).

The Cytoplasmic segment spans residues 1 to 619 (MAANVGSMFQ…LVLSNKMART (619 aa)). Coiled-coil stretches lie at residues 67-450 (LLKS…QDLS) and 502-556 (LSII…FLQS). S586 carries the phosphoserine modification. The chain crosses the membrane as a helical; Anchor for type IV membrane protein span at residues 620–640 (IGFFYTLFLHCLVFLVLYKLA). Residues 641–678 (WSESMERDCATFCAKKFADHLHKFHENDNGAAAGDLWQ) lie on the Lumenal side of the membrane.

This sequence belongs to the CASP family. As to quaternary structure, homodimer; disulfide-linked. Interacts with GOLGA5.

It is found in the golgi apparatus membrane. May be involved in intra-Golgi retrograde transport. This is Protein CASP (CUX1) from Homo sapiens (Human).